Here is a 95-residue protein sequence, read N- to C-terminus: MSLEKTEVDTISRLAAISVDASEVDQLTAKISNVLDLFQRMEAVDTTNVEPMSHPLDQVQRLREDVVTETDHHEEYQKLAPAAEKGMYLVPQVID.

It belongs to the GatC family. Heterotrimer of A, B and C subunits.

The enzyme catalyses L-glutamyl-tRNA(Gln) + L-glutamine + ATP + H2O = L-glutaminyl-tRNA(Gln) + L-glutamate + ADP + phosphate + H(+). The catalysed reaction is L-aspartyl-tRNA(Asn) + L-glutamine + ATP + H2O = L-asparaginyl-tRNA(Asn) + L-glutamate + ADP + phosphate + 2 H(+). Its function is as follows. Allows the formation of correctly charged Asn-tRNA(Asn) or Gln-tRNA(Gln) through the transamidation of misacylated Asp-tRNA(Asn) or Glu-tRNA(Gln) in organisms which lack either or both of asparaginyl-tRNA or glutaminyl-tRNA synthetases. The reaction takes place in the presence of glutamine and ATP through an activated phospho-Asp-tRNA(Asn) or phospho-Glu-tRNA(Gln). The polypeptide is Aspartyl/glutamyl-tRNA(Asn/Gln) amidotransferase subunit C (Hydrogenovibrio crunogenus (strain DSM 25203 / XCL-2) (Thiomicrospira crunogena)).